The chain runs to 165 residues: Cytochrome c-type biogenesis protein CcmE (165 aa).

Over 1 to 29 the chain is Cytoplasmic; the sequence is MSATAEQNARNPKGKGGFARTVSQRKRKR. Residues 30 to 50 form a helical; Signal-anchor for type II membrane protein membrane-spanning segment; it reads LFLIGGALAVLAVAVGLMLTA. At 51–165 the chain is on the periplasmic side; the sequence is FNQDIRFFRT…LKKKGVWEGK (115 aa). Residues histidine 143 and tyrosine 147 each coordinate heme.

This sequence belongs to the CcmE/CycJ family.

It localises to the cell inner membrane. Heme chaperone required for the biogenesis of c-type cytochromes. Transiently binds heme delivered by CcmC and transfers the heme to apo-cytochromes in a process facilitated by CcmF and CcmH. The protein is Cytochrome c-type biogenesis protein CcmE of Brucella canis (strain ATCC 23365 / NCTC 10854 / RM-666).